Consider the following 247-residue polypeptide: ATP synthase subunit a (247 aa).

The next 6 membrane-spanning stretches (helical) occupy residues 24-44 (IAFTTSSAYMLLAVVLIAAMM), 82-102 (FFPLVFSLFMFIFVSNIVGII), 112-132 (IIVTFSLALLVFLTVIIYGFY), 141-161 (LFVPSGIPAVILPLVVIIEII), 181-201 (GHVTLKVFASFVTMLGALGFV), and 206-226 (ALLPLGLTVALTGLELMVAFL).

This sequence belongs to the ATPase A chain family. F-type ATPases have 2 components, CF(1) - the catalytic core - and CF(0) - the membrane proton channel. CF(1) has five subunits: alpha(3), beta(3), gamma(1), delta(1), epsilon(1). CF(0) has four main subunits: a, b, b' and c.

Its subcellular location is the cell inner membrane. Key component of the proton channel; it plays a direct role in the translocation of protons across the membrane. In Bradyrhizobium sp. (strain ORS 278), this protein is ATP synthase subunit a.